A 199-amino-acid chain; its full sequence is Prostatic spermine-binding protein (199 aa).

Residues 1–18 (MLLLLTLAFLASPTCRAQ) form the signal peptide. The region spanning 19-151 (NVLGNAAGKY…VRGIGFKWGN (133 aa)) is the Jacalin-type lectin domain. N-linked (GlcNAc...) asparagine glycosylation occurs at asparagine 62. Residues 159-199 (HYNNKEDKADNKDADNKDADNKDDGDEDDDGNDDDDQKDES) form a disordered region. The span at 160-180 (YNNKEDKADNKDADNKDADNK) shows a compositional bias: basic and acidic residues. A compositionally biased stretch (acidic residues) spans 181-199 (DDGDEDDDGNDDDDQKDES).

It to rat SBP. As to expression, prostate.

Functionally, this protein seems to be functional equivalent to rat prostatic spermine-binding protein, which is involved in polyamine binding. The polypeptide is Prostatic spermine-binding protein (Sbp) (Mus musculus (Mouse)).